The following is a 398-amino-acid chain: 1-deoxy-D-xylulose 5-phosphate reductoisomerase (398 aa).

Positions 10, 11, 12, 13, 36, 37, 38, and 124 each coordinate NADPH. K125 contacts 1-deoxy-D-xylulose 5-phosphate. NADPH is bound at residue E126. Position 150 (D150) interacts with Mn(2+). 1-deoxy-D-xylulose 5-phosphate contacts are provided by S151, E152, S186, and H209. E152 lines the Mn(2+) pocket. NADPH is bound at residue G215. Positions 222, 227, 228, and 231 each coordinate 1-deoxy-D-xylulose 5-phosphate. A Mn(2+)-binding site is contributed by E231.

This sequence belongs to the DXR family. As to quaternary structure, homodimer. The cofactor is Mg(2+). Requires Mn(2+) as cofactor.

The enzyme catalyses 2-C-methyl-D-erythritol 4-phosphate + NADP(+) = 1-deoxy-D-xylulose 5-phosphate + NADPH + H(+). It functions in the pathway isoprenoid biosynthesis; isopentenyl diphosphate biosynthesis via DXP pathway; isopentenyl diphosphate from 1-deoxy-D-xylulose 5-phosphate: step 1/6. In terms of biological role, catalyzes the NADPH-dependent rearrangement and reduction of 1-deoxy-D-xylulose-5-phosphate (DXP) to 2-C-methyl-D-erythritol 4-phosphate (MEP). This chain is 1-deoxy-D-xylulose 5-phosphate reductoisomerase, found in Salmonella choleraesuis (strain SC-B67).